The chain runs to 66 residues: Myrmicitoxin(1)-Pr5a (66 aa).

A signal peptide spans 1–25 (MRSLYLSFSLTIIFVLVIMHAEAKA). The propeptide occupies 26–37 (ISEPNAIAEADP). At Val-65 the chain carries Valine amide.

Belongs to the formicidae venom clade 3 family. As to expression, expressed by the venom gland.

It is found in the secreted. In terms of biological role, toxin that causes a rapid and irreversible paralysis when intrathoracically injected into insects (blowflies). Does not cause spontaneous nocifensive behaviors by intraplantar injection in mice. Exhibits hemolytic and cytotoxic activities on HEK293 cells. This is Myrmicitoxin(1)-Pr5a from Pogonomyrmex rugosus (Desert harvester ant).